Here is a 1196-residue protein sequence, read N- to C-terminus: Protein BRASSINOSTEROID INSENSITIVE 1 (1196 aa).

Positions 1-23 (MKTFSSFFLSVTTLFFFSFFSLS) are cleaved as a signal peptide. The short motif at 62 to 69 (CTFDGVTC) is the Cys pair 1 element. LRR repeat units follow at residues 71–98 (DDKV…LLSL), 99–121 (TGLE…FKCS), 122–146 (ASLT…SLGS), 148–169 (SGLK…VSGG), 172–197 (LNSL…VLSD), 199–221 (CGEL…VSRC), 222–244 (VNLE…LGDC), 245–268 (SALQ…ISTC), 269–290 (TELK…PLPL), 291–314 (KSLQ…LSGA), 316–338 (DTLT…FFGS), 339–363 (CSLL…TLLK), 364–388 (MRGL…LTNL), 390–413 (ASLL…LCQN), 415–439 (KNTL…LSNC), 441–463 (ELVS…LGSL), 464–487 (SKLR…LMYV), 488–511 (KTLE…LSNC), 513–535 (NLNW…IGRL), 536–559 (ENLA…LGDC), and 561–583 (SLIW…MFKQ). Residue N112 is glycosylated (N-linked (GlcNAc...) asparagine). N-linked (GlcNAc...) asparagine glycosylation occurs at N154. N233 is a glycosylation site (N-linked (GlcNAc...) asparagine). N275 is a glycosylation site (N-linked (GlcNAc...) asparagine). 4 N-linked (GlcNAc...) asparagine glycosylation sites follow: N351, N387, N401, and N438. An N-linked (GlcNAc...) asparagine glycan is attached at N510. N-linked (GlcNAc...) asparagine glycosylation is found at N545 and N573. Y597 provides a ligand contact to brassinolide. N636 is a glycosylation site (N-linked (GlcNAc...) asparagine). The tract at residues 640-642 (RVY) is SERK1 binding. Brassinolide is bound by residues Y642 and S647. N653 carries N-linked (GlcNAc...) asparagine glycosylation. LRR repeat units follow at residues 653 to 677 (NGSM…IGSM), 678 to 701 (PYLF…VGDL), 702 to 725 (RGLN…MSAL), and 727 to 750 (MLTE…QFET). Residue N705 coordinates brassinolide. The SERK1 binding stretch occupies residues 726-729 (TMLT). Residue N737 is glycosylated (N-linked (GlcNAc...) asparagine). The tract at residues 746–750 (GQFET) is SERK1 binding. The Cys pair 2 signature appears at 763-770 (CGYPLPRC). The helical transmembrane segment at 793-813 (AGSVAMGLLFSFVCIFGLILV) threads the bilayer. Phosphotyrosine is present on Y831. S838 bears the Phosphoserine mark. A phosphothreonine mark is found at T842, T846, and T851. Position 858 is a phosphoserine (S858). Residues T872 and T880 each carry the phosphothreonine modification. Residues 883–1158 (FHNDSLIGSG…VQVMAMFKEI (276 aa)) form the Protein kinase domain. A phosphoserine mark is found at S887 and S891. ATP contacts are provided by residues 889 to 897 (IGSGGFGDV) and K911. The residue at position 956 (Y956) is a Phosphotyrosine. Residues 957–959 (EFM) and 963–966 (SLED) contribute to the ATP site. Position 981 is a phosphoserine (S981). T982 carries the phosphothreonine modification. Catalysis depends on D1009, which acts as the Proton acceptor. ATP is bound by residues 1009–1014 (DMKSSN) and D1027. At S1035 the chain carries Phosphoserine. A Phosphothreonine modification is found at T1039. Residues S1042 and S1044 each carry the phosphoserine modification. A phosphothreonine mark is found at T1045 and T1049. Y1052 bears the Phosphotyrosine mark. S1060 carries the phosphoserine modification. Phosphotyrosine is present on Y1072. 2 positions are modified to phosphoserine: S1166 and S1168. A Phosphothreonine modification is found at T1169. Phosphoserine is present on residues S1172 and S1179. T1180 is modified (phosphothreonine). Residue S1187 is modified to Phosphoserine.

This sequence belongs to the protein kinase superfamily. Ser/Thr protein kinase family. In terms of assembly, monomer or homodimer in the plasma membrane. Heterodimer with BAK1 in the endosomes. Interacts with SERK1 and TTL in a kinase-dependent manner. Bind to SERK1 in a brassinolide-dependent manner. Component of the SERK1 signaling complex, composed of KAPP, CDC48A, GRF6 or GRF7, SERK1, SERK2, SERK3/BAK1 and BRI1. Interacts with CDG1. No interactions with PSKR1 or CNGC17. Interacts with BIK1. Interacts with B'ALPHA, B'BETA, B'GAMMA and B'ETA. Interacts with BSK1 and BSK3. Interacts with BSK5, BSK6 and BSK11. Post-translationally, autophosphorylated on Tyr-831, Tyr-956 and maybe Tyr-1072. Phosphorylated on at least 12 sites, with a preference for Ser residues. Transphosphorylated on Ser-887 by SERK1 and on Ser-838, Thr-846, Ser-858 and Ser-1166 by BAK1. Phosphorylation on Ser-1166 enhances the kinase activity. Glycosylated. As to expression, expressed ubiquitously.

It localises to the cell membrane. The protein resides in the endosome membrane. The enzyme catalyses L-seryl-[protein] + ATP = O-phospho-L-seryl-[protein] + ADP + H(+). The catalysed reaction is L-threonyl-[protein] + ATP = O-phospho-L-threonyl-[protein] + ADP + H(+). It carries out the reaction L-tyrosyl-[protein] + ATP = O-phospho-L-tyrosyl-[protein] + ADP + H(+). Its activity is regulated as follows. Activated by Ser and Thr phosphorylation. Functionally, receptor with a dual specificity kinase activity acting on both serine/threonine- and tyrosine-containing substrates. Regulates, in response to brassinosteroid binding, a signaling cascade involved in plant development, including expression of light- and stress-regulated genes, promotion of cell elongation, normal leaf and chloroplast senescence, and flowering. Binds brassinolide (BL), and less effectively castasterone (CS), but not 2,3,22,23-O-tetramethylbrassinolide or ecdysone. May be involved in a feedback regulation of brassinosteroid biosynthesis. Phosphorylates BRI1-associated receptor kinase 1 (BAK1), Transthyretin-Like protein (TTL) and SERK1 on 'Ser-299' and 'Thr-462' in vitro. May have a guanylyl cyclase activity. Phosphorylates BSK1, BSK2 and BSK3 in vitro. Phosphorylates BSK1, BSK3, BSK5, BSK6, BSK8 and BSK11 in vitro. In Arabidopsis thaliana (Mouse-ear cress), this protein is Protein BRASSINOSTEROID INSENSITIVE 1.